The primary structure comprises 165 residues: Methyl-coenzyme M reductase II operon protein D (165 aa).

MCR is composed of three subunits: alpha, beta, and gamma. The function of protein D is not known.

This is Methyl-coenzyme M reductase II operon protein D (mrtD) from Methanothermus fervidus (strain ATCC 43054 / DSM 2088 / JCM 10308 / V24 S).